A 393-amino-acid polypeptide reads, in one-letter code: Carbamoyl phosphate synthase small chain (393 aa).

Residues 1 to 194 (MSKDTTTYQG…TYVIEAEGEE (194 aa)) form a CPSase region. Residues Ser61, Gly245, and Gly247 each contribute to the L-glutamine site. The Glutamine amidotransferase type-1 domain maps to 195-390 (RHTVVAYDLG…VELMDADAQK (196 aa)). Residue Cys273 is the Nucleophile of the active site. The L-glutamine site is built by Phe274, Gln277, Asn315, Gly317, and Phe318. Active-site residues include His363 and Glu365.

This sequence belongs to the CarA family. In terms of assembly, composed of two chains; the small (or glutamine) chain promotes the hydrolysis of glutamine to ammonia, which is used by the large (or ammonia) chain to synthesize carbamoyl phosphate. Tetramer of heterodimers (alpha,beta)4.

It carries out the reaction hydrogencarbonate + L-glutamine + 2 ATP + H2O = carbamoyl phosphate + L-glutamate + 2 ADP + phosphate + 2 H(+). It catalyses the reaction L-glutamine + H2O = L-glutamate + NH4(+). Its pathway is amino-acid biosynthesis; L-arginine biosynthesis; carbamoyl phosphate from bicarbonate: step 1/1. The protein operates within pyrimidine metabolism; UMP biosynthesis via de novo pathway; (S)-dihydroorotate from bicarbonate: step 1/3. Functionally, small subunit of the glutamine-dependent carbamoyl phosphate synthetase (CPSase). CPSase catalyzes the formation of carbamoyl phosphate from the ammonia moiety of glutamine, carbonate, and phosphate donated by ATP, constituting the first step of 2 biosynthetic pathways, one leading to arginine and/or urea and the other to pyrimidine nucleotides. The small subunit (glutamine amidotransferase) binds and cleaves glutamine to supply the large subunit with the substrate ammonia. In Corynebacterium glutamicum (strain ATCC 13032 / DSM 20300 / JCM 1318 / BCRC 11384 / CCUG 27702 / LMG 3730 / NBRC 12168 / NCIMB 10025 / NRRL B-2784 / 534), this protein is Carbamoyl phosphate synthase small chain.